Consider the following 295-residue polypeptide: Hepatic leukemia factor (295 aa).

The segment covering 34-52 has biased composition (basic and acidic residues); the sequence is LHPEDAFSKDRDKGKKLDD. 2 disordered regions span residues 34–69 and 93–160; these read LHPEDAFSKDRDKGKKLDDGSNSPTVPQSAFLGPTL and SENG…NRNT. A bZIP domain is found at 225 to 288; the sequence is DDKYWARRRK…GKCKNILAKY (64 aa). The interval 227–247 is basic motif; it reads KYWARRRKNNMAAKRSRDARR. The tract at residues 248–255 is leucine-zipper; it reads LKENQIAI.

The protein belongs to the bZIP family. PAR subfamily. In terms of assembly, binds DNA specifically as homodimer or heterodimer with other PAR factors. In terms of tissue distribution, isoform HLF43 is abundant in brain, liver and kidney. Isoform HLF36 is expressed only in the liver. Both isoforms accumulate in the liver with different circadian amplitudes. Isoform HLF36 reaches peak expression levels between 8 and 12 p.m. Isoform HLF43 displays a more pronounced fluctuation through the day.

Its subcellular location is the nucleus. The protein is Hepatic leukemia factor (Hlf) of Rattus norvegicus (Rat).